Here is a 791-residue protein sequence, read N- to C-terminus: MEDMNSKIIEKLEYNRIIRQLSDLAITAPAKAQALKLMPSSDFDEVKKSIDQTRVLSNILRVKGPMPITDFKDVRPSLKRLKVKANLNGEELGNIFLVLSLAKDVGQFASDLEEREIDTRPIEKYLKNLAVPEDLFKKLNQAIEYDGTVKDTASSKLMQLRHDIQSNETDIKNHMNDYISGKHTQYLSENIVTIRDGRYVLPVKQEYKNKFGGVVHDQSASGQTLFVEPQAVLVLNNRQQNLLAQERQEIHRILIELSELAGAYQKEINNNALALTQLDFLSAKSKLAKKMKATEPVLNQDHIIKLRKARHPLIDPKKVVPNNIELGTTFDTMLITGPNTGGKTITLKTLGLLQLMAQAGLFITAEEGSQLTVFNEIYADIGDEQSIEQSLSTFSSHMDQIIKIMNNVTEDDLVLIDELGAGTDPEEGASLAIAILDDLRQTQAKIAITTHYPELKLYGYNRKRTTNASMEFDLKKLAPTYRLRIGIPGQSNAFAIAHQLGMNEAVVDKARDLMNDEDSDINKMIERLTEQTKAAEQLHETLKQNVDQSITLKRQLQNGLDWYNQQVQKQLEKSQEKADEMLAKKRKQAEKIINDLEEQRRAGGQVRTNKVIEAKGALNKLERENQNLANNKVLQREKKRHDVSVGDNVKVLSYGQQGVITKKLGEHEFEVQIGILKVKVTDRDVEKIAAQASQKKPEKSVRSSRGLRSSRASSELDLRGQRYEEALTNLDRYLDASLLAGLNTVTIIHGIGTGAIRNGVQQYLKRNRHVKSYNYAPANQGGTGATIVNLQ.

337–344 (GPNTGGKT) contributes to the ATP binding site. The segment at 689-715 (AAQASQKKPEKSVRSSRGLRSSRASSE) is disordered. Over residues 703-713 (SSRGLRSSRAS) the composition is skewed to low complexity. The Smr domain maps to 716 to 791 (LDLRGQRYEE…GTGATIVNLQ (76 aa)).

Belongs to the DNA mismatch repair MutS family. MutS2 subfamily. As to quaternary structure, homodimer. Binds to stalled ribosomes, contacting rRNA.

Endonuclease that is involved in the suppression of homologous recombination and thus may have a key role in the control of bacterial genetic diversity. In terms of biological role, acts as a ribosome collision sensor, splitting the ribosome into its 2 subunits. Detects stalled/collided 70S ribosomes which it binds and splits by an ATP-hydrolysis driven conformational change. Acts upstream of the ribosome quality control system (RQC), a ribosome-associated complex that mediates the extraction of incompletely synthesized nascent chains from stalled ribosomes and their subsequent degradation. Probably generates substrates for RQC. This is Endonuclease MutS2 from Lactobacillus gasseri (strain ATCC 33323 / DSM 20243 / BCRC 14619 / CIP 102991 / JCM 1131 / KCTC 3163 / NCIMB 11718 / NCTC 13722 / AM63).